A 1068-amino-acid polypeptide reads, in one-letter code: Target of Nesh-SH3 (1068 aa).

Positions 1–21 are cleaved as a signal peptide; that stretch reads MLSSLGCLLLCGSITLALGNA. N-linked (GlcNAc...) asparagine glycosylation is present at Asn37. In terms of domain architecture, Fibronectin type-III 1 spans 116–214; that stretch reads KPLQLVVGTL…KIFNHKTVVG (99 aa). Disordered stretches follow at residues 315-351 and 384-811; these read SKTP…DVSE and VFSS…SITD. The span at 326–339 shows a compositional bias: low complexity; sequence RPTTVTPETVPRST. A compositionally biased stretch (polar residues) spans 340-351; it reads KPTTSSALDVSE. Over residues 447 to 462 the composition is skewed to low complexity; it reads QPTTPAPQQTTSIPST. The segment covering 463 to 473 has biased composition (basic residues); sequence PKRRPRPKPPR. Residues 482-499 are compositionally biased toward polar residues; the sequence is AGTITPKISKSPEPTWTT. Residues 532-544 show a composition bias toward pro residues; it reads RAPPKPKTSPRPR. Positions 562 to 574 are enriched in polar residues; that stretch reads PKTSPSPEVSYTT. 2 stretches are compositionally biased toward low complexity: residues 603–631 and 737–750; these read IPFI…STQE and PPLR…GTPL. Positions 802–811 are enriched in polar residues; that stretch reads PDNSPCSITD. Positions 833–926 constitute a Fibronectin type-III 2 domain; that stretch reads PPTNLTVVTV…NTVAFSTESA (94 aa).

Probably interacts with ABI3. Expressed in brain, heart, lung, liver, pancreas kidney and placenta.

Its subcellular location is the secreted. The sequence is that of Target of Nesh-SH3 from Homo sapiens (Human).